A 224-amino-acid polypeptide reads, in one-letter code: 7-cyano-7-deazaguanine synthase (224 aa).

9 to 19 (LSGGLDSATVL) serves as a coordination point for ATP. The Zn(2+) site is built by cysteine 189, cysteine 199, cysteine 202, and cysteine 205.

The protein belongs to the QueC family. The cofactor is Zn(2+).

It carries out the reaction 7-carboxy-7-deazaguanine + NH4(+) + ATP = 7-cyano-7-deazaguanine + ADP + phosphate + H2O + H(+). It functions in the pathway purine metabolism; 7-cyano-7-deazaguanine biosynthesis. Catalyzes the ATP-dependent conversion of 7-carboxy-7-deazaguanine (CDG) to 7-cyano-7-deazaguanine (preQ(0)). The sequence is that of 7-cyano-7-deazaguanine synthase from Ralstonia nicotianae (strain ATCC BAA-1114 / GMI1000) (Ralstonia solanacearum).